The primary structure comprises 302 residues: ATP synthase gamma chain (302 aa).

It belongs to the ATPase gamma chain family. F-type ATPases have 2 components, CF(1) - the catalytic core - and CF(0) - the membrane proton channel. CF(1) has five subunits: alpha(3), beta(3), gamma(1), delta(1), epsilon(1). CF(0) has three main subunits: a, b and c.

It is found in the cell membrane. Produces ATP from ADP in the presence of a proton gradient across the membrane. The gamma chain is believed to be important in regulating ATPase activity and the flow of protons through the CF(0) complex. The chain is ATP synthase gamma chain from Leuconostoc citreum (strain KM20).